The sequence spans 428 residues: 3-oxo-tetronate kinase (428 aa).

ATP is bound by residues Ser-267, 365-368 (GGET), and Gly-409.

The protein belongs to the four-carbon acid sugar kinase family.

The catalysed reaction is 3-dehydro-L-erythronate + ATP = 3-dehydro-4-O-phospho-L-erythronate + ADP + H(+). It carries out the reaction 3-dehydro-D-erythronate + ATP = 3-dehydro-4-O-phospho-D-erythronate + ADP + H(+). Functionally, catalyzes the ATP-dependent phosphorylation of 3-oxo-tetronate to 3-oxo-tetronate 4-phosphate. The sequence is that of 3-oxo-tetronate kinase from Burkholderia multivorans (strain ATCC 17616 / 249).